The sequence spans 196 residues: Pyridoxal 5'-phosphate synthase subunit PdxT (196 aa).

Position 46-48 (46-48) interacts with L-glutamine; it reads GES. Cys78 serves as the catalytic Nucleophile. L-glutamine contacts are provided by residues Arg105 and 133-134; that span reads IR. Catalysis depends on charge relay system residues His169 and Glu171.

Belongs to the glutaminase PdxT/SNO family. In terms of assembly, in the presence of PdxS, forms a dodecamer of heterodimers. Only shows activity in the heterodimer.

It catalyses the reaction aldehydo-D-ribose 5-phosphate + D-glyceraldehyde 3-phosphate + L-glutamine = pyridoxal 5'-phosphate + L-glutamate + phosphate + 3 H2O + H(+). The catalysed reaction is L-glutamine + H2O = L-glutamate + NH4(+). The protein operates within cofactor biosynthesis; pyridoxal 5'-phosphate biosynthesis. Functionally, catalyzes the hydrolysis of glutamine to glutamate and ammonia as part of the biosynthesis of pyridoxal 5'-phosphate. The resulting ammonia molecule is channeled to the active site of PdxS. This is Pyridoxal 5'-phosphate synthase subunit PdxT from Geobacillus kaustophilus (strain HTA426).